Here is a 1156-residue protein sequence, read N- to C-terminus: MLKVYYTFGCPNCGGPIDDEHLLAGVPCSKCLPGRVENLDYRVIYDLLVKNSTLKGYAEYFYDNETFEEIVRIFKRVIGNEPWNLQKYWIKRLAKSESFSLSAPTGLGKTTTLLVYSLFFSNTTLYVVPTNSLKDQICERLRNMGAKVSCNDVKEEYINVATFNRILRHYDNYVSLQPKLVIVDDSDMILKSGKTTEVMAKILGISEEIFQYAISLIRLKRILKFNEDDKELKNKIVELEYKIGSWKPFVQFLVASATLRPKGIKQQALRTLIGFEPSTIQTYLRNIADLYYQGVDIEAILDKISDNGGLLLVSKEYGREKMLELKEIIEKRGYSTGLAISGRKFLNKFTEGKIDYLIGSASYYGVAVRGLDEPKRLKYVIFYGIPKIRLNLTDALNNPSLIVKIGELLNIDVKDIRRKLLFLSPPEFQILRYSLMKDEELSGKLKDIKVNLINIKEKIWDVLKSDNIKKLKADTFLVTENNGKYYVYIPDTVTYIQASGRSSRIISNGLTFGISIVLVDNIDLLDILSQKLKKIIPNFMFKNINEVDIRELKSLAVSSREVSTSQKKKINIKTILLIVESPTKAKTIARLFGRPSRREVHGIPVYETIILVNDEILITNIIATKGHITDLTTENIGYYGVEVGNNEFNAYYSPIYKCYNCGKTFTIKSNTCPYCGSVFISSSEKVVSALRKLSTEVDEIYIASDPDQEGEKIAYDVAMLISPYNKNIYRIKYHEITRNGILNAILNKGKINMNLVKSQIVRRIEDRWIGFELSLALKSMFYERNHGSGRVQGPVLSWIVERTKEYKKNYGWILYIKLGDYAIKKFFRIKEEANKFIEKLNIKINLISERKEIQNPLPPFTTDSLLMDAYDKLGIGSQIVMKIAQDLFESGLITYHRTDSTHVSALGISIAKEYLESKNLNDSFSGRSWGNEGTHEAIRPTSSMDTESLIKDIEDNPNKYFIKFTKYHLRIYDLIFRRFIASQMKPAEVTYSKFEIFINGEKLEVELPTKISGGFSIIYPLKTYVVSEKYSTYLTKGSIIPLFTYAEIIKNMKEKEIGRPSTYAKTISALIRHGYVVESKRKALLIATNKGIKAYEFLSSCCSDLISENRTKLLLQKIDKIANGDVNVDYVLEDLHKEITQISGKLVNSLKLDTNV.

The RG N-terminal-type zinc finger occupies 1 to 38 (MLKVYYTFGCPNCGGPIDDEHLLAGVPCSKCLPGRVEN). Zn(2+)-binding residues include C10, C13, C28, and C31. Residues Q86 and 103 to 110 (APTGLGKT) each bind ATP. Residues 90–277 (IKRLAKSESF…ALRTLIGFEP (188 aa)) form the Helicase ATP-binding domain. A DEAD box motif is present at residues 184 to 187 (DDSD). The interval 570–1156 (INIKTILLIV…VNSLKLDTNV (587 aa)) is topoisomerase I. Residues 574 to 736 (TILLIVESPT…NIYRIKYHEI (163 aa)) enclose the Toprim domain. A Mg(2+)-binding site is contributed by E580. Residues 655–682 (IYKCYNCGKTFTIKSNTCPYCGSVFISS) form an RG C-terminal-type zinc finger. Zn(2+)-binding residues include C658, C661, C672, and C675. A Mg(2+)-binding site is contributed by D705. Residues 752 to 1143 (NMNLVKSQIV…DLHKEITQIS (392 aa)) enclose the Topo IA-type catalytic domain. Y895 acts as the O-(5'-phospho-DNA)-tyrosine intermediate in catalysis.

The protein in the N-terminal section; belongs to the DEAD box helicase family. DDVD subfamily. It in the C-terminal section; belongs to the type IA topoisomerase family. As to quaternary structure, monomer. It depends on Zn(2+) as a cofactor. Mg(2+) serves as cofactor.

The protein resides in the cytoplasm. It catalyses the reaction ATP + H2O = ADP + phosphate + H(+). In terms of biological role, modifies the topological state of DNA by introducing positive supercoils in an ATP-dependent process, increasing the linking number in steps of +1. Binds to single-stranded DNA, transiently cleaves and then rejoins the ends, introducing a positive supercoil in the process. The scissile phosphodiester is attacked by the catalytic tyrosine of the enzyme, resulting in the formation of a DNA-(5'-phosphotyrosyl)-enzyme intermediate. Probably involved in rewinding DNA strands in regions of the chromosome that have opened up to allow replication, transcription, DNA repair and/or for DNA protection. The polypeptide is Reverse gyrase 1 (Sulfurisphaera tokodaii (strain DSM 16993 / JCM 10545 / NBRC 100140 / 7) (Sulfolobus tokodaii)).